The chain runs to 158 residues: Ribonuclease H (158 aa).

One can recognise an RNase H type-1 domain in the interval 9–155 (AFKPVELYTD…CDKLAVAAYQ (147 aa)). 4 residues coordinate Mg(2+): Asp-18, Glu-58, Asp-80, and Asp-147.

It belongs to the RNase H family. As to quaternary structure, monomer. The cofactor is Mg(2+).

The protein localises to the cytoplasm. It carries out the reaction Endonucleolytic cleavage to 5'-phosphomonoester.. Functionally, endonuclease that specifically degrades the RNA of RNA-DNA hybrids. The protein is Ribonuclease H of Rhodopirellula baltica (strain DSM 10527 / NCIMB 13988 / SH1).